The primary structure comprises 560 residues: Putative protease Do-like 11, mitochondrial (560 aa).

The transit peptide at 1 to 65 (MFFRPCVHTV…RRSSTSAAER (65 aa)) directs the protein to the mitochondrion. The tract at residues 117–302 (TEYSKSKPWK…ESRQYSCFGS (186 aa)) is serine protease. Catalysis depends on charge relay system residues H150, D184, and S258. Positions 288 to 384 (ITSVQESRQY…YLVSMKKPGE (97 aa)) constitute a PDZ domain.

This sequence belongs to the peptidase S1C family.

It is found in the mitochondrion membrane. Putative serine protease. The chain is Putative protease Do-like 11, mitochondrial (DEGP11) from Arabidopsis thaliana (Mouse-ear cress).